The following is a 155-amino-acid chain: Small ribosomal subunit protein uS7 (155 aa).

It belongs to the universal ribosomal protein uS7 family. In terms of assembly, part of the 30S ribosomal subunit. Contacts proteins S9 and S11.

Its function is as follows. One of the primary rRNA binding proteins, it binds directly to 16S rRNA where it nucleates assembly of the head domain of the 30S subunit. Is located at the subunit interface close to the decoding center, probably blocks exit of the E-site tRNA. The sequence is that of Small ribosomal subunit protein uS7 from Nautilia profundicola (strain ATCC BAA-1463 / DSM 18972 / AmH).